Reading from the N-terminus, the 427-residue chain is Large ribosomal subunit protein uL4 (427 aa).

Position 2 is an N-acetylalanine (Ala2). At Lys14 the chain carries N6-acetyllysine. Omega-N-methylarginine is present on Arg97. The residue at position 106 (Lys106) is an N6-acetyllysine. Residue Lys239 forms a Glycyl lysine isopeptide (Lys-Gly) (interchain with G-Cter in SUMO2) linkage. Lys259 is subject to N6-acetyllysine. At Thr266 the chain carries Phosphothreonine. Phosphoserine occurs at positions 290 and 295. The residue at position 300 (Arg300) is a Citrulline. Lys327 participates in a covalent cross-link: Glycyl lysine isopeptide (Lys-Gly) (interchain with G-Cter in SUMO2). N6-acetyllysine occurs at positions 333 and 353. An N6-acetyllysine; alternate modification is found at Lys364. Residue Lys364 forms a Glycyl lysine isopeptide (Lys-Gly) (interchain with G-Cter in SUMO1); alternate linkage. At Ser365 the chain carries Phosphoserine. Positions 369–427 (AAVAGKKPVVGKKGKKAAVGVKKQKKPLVGKKAAATKKPAPEKKPAEKKPTTEEKKPAA) are disordered. A compositionally biased stretch (basic residues) spans 377–397 (VVGKKGKKAAVGVKKQKKPLV). Basic and acidic residues predominate over residues 407 to 427 (PAPEKKPAEKKPTTEEKKPAA).

Belongs to the universal ribosomal protein uL4 family. Component of the large ribosomal subunit. May bind IPO9 with low affinity. Interacts with RBM3. Citrullinated by PADI4.

The protein resides in the cytoplasm. In terms of biological role, component of the large ribosomal subunit. The ribosome is a large ribonucleoprotein complex responsible for the synthesis of proteins in the cell. The polypeptide is Large ribosomal subunit protein uL4 (RPL4) (Pongo abelii (Sumatran orangutan)).